A 220-amino-acid polypeptide reads, in one-letter code: Uracil-DNA glycosylase (220 aa).

Asp61 functions as the Proton acceptor in the catalytic mechanism.

It belongs to the uracil-DNA glycosylase (UDG) superfamily. UNG family.

It localises to the cytoplasm. It catalyses the reaction Hydrolyzes single-stranded DNA or mismatched double-stranded DNA and polynucleotides, releasing free uracil.. In terms of biological role, excises uracil residues from the DNA which can arise as a result of misincorporation of dUMP residues by DNA polymerase or due to deamination of cytosine. This chain is Uracil-DNA glycosylase, found in Pseudoalteromonas translucida (strain TAC 125).